We begin with the raw amino-acid sequence, 374 residues long: Type II methyltransferase M.BbvI (374 aa).

An SAM-dependent MTase C5-type domain is found at 3 to 347 (FRKGELFCGP…EAVLKTFARI (345 aa)). The active site involves Cys92.

This sequence belongs to the class I-like SAM-binding methyltransferase superfamily. C5-methyltransferase family.

The catalysed reaction is a 2'-deoxycytidine in DNA + S-adenosyl-L-methionine = a 5-methyl-2'-deoxycytidine in DNA + S-adenosyl-L-homocysteine + H(+). In terms of biological role, a methylase, recognizes the double-stranded sequence 5'-GCAGC-3', methylates C-2 on both strands, and protects the DNA from cleavage by the BbvI endonuclease. This is Type II methyltransferase M.BbvI (bbvIM) from Brevibacillus brevis (Bacillus brevis).